Consider the following 51-residue polypeptide: Large ribosomal subunit protein eL39 (51 aa).

This sequence belongs to the eukaryotic ribosomal protein eL39 family.

This chain is Large ribosomal subunit protein eL39, found in Pyrobaculum neutrophilum (strain DSM 2338 / JCM 9278 / NBRC 100436 / V24Sta) (Thermoproteus neutrophilus).